Reading from the N-terminus, the 199-residue chain is Cytochrome c oxidase subunit 2 (199 aa).

A helical membrane pass occupies residues 1–13 (AICSLVLYLLTLM). Residues 14–26 (LMEKLSSNTVDAQ) lie on the Mitochondrial matrix side of the membrane. Residues 27–54 (EVELIWTILPAIVLILLALPSLQILYMM) traverse the membrane as a helical segment. The Mitochondrial intermembrane portion of the chain corresponds to 55–199 (DEIDEPDLTL…SSLLSISSSL (145 aa)). 6 residues coordinate Cu cation: His128, Cys163, Glu165, Cys167, His171, and Met174. Position 165 (Glu165) interacts with Mg(2+).

This sequence belongs to the cytochrome c oxidase subunit 2 family. As to quaternary structure, component of the cytochrome c oxidase (complex IV, CIV), a multisubunit enzyme composed of 14 subunits. The complex is composed of a catalytic core of 3 subunits MT-CO1, MT-CO2 and MT-CO3, encoded in the mitochondrial DNA, and 11 supernumerary subunits COX4I, COX5A, COX5B, COX6A, COX6B, COX6C, COX7A, COX7B, COX7C, COX8 and NDUFA4, which are encoded in the nuclear genome. The complex exists as a monomer or a dimer and forms supercomplexes (SCs) in the inner mitochondrial membrane with NADH-ubiquinone oxidoreductase (complex I, CI) and ubiquinol-cytochrome c oxidoreductase (cytochrome b-c1 complex, complex III, CIII), resulting in different assemblies (supercomplex SCI(1)III(2)IV(1) and megacomplex MCI(2)III(2)IV(2)). Found in a complex with TMEM177, COA6, COX18, COX20, SCO1 and SCO2. Interacts with TMEM177 in a COX20-dependent manner. Interacts with COX20. Interacts with COX16. Cu cation serves as cofactor.

It is found in the mitochondrion inner membrane. The enzyme catalyses 4 Fe(II)-[cytochrome c] + O2 + 8 H(+)(in) = 4 Fe(III)-[cytochrome c] + 2 H2O + 4 H(+)(out). In terms of biological role, component of the cytochrome c oxidase, the last enzyme in the mitochondrial electron transport chain which drives oxidative phosphorylation. The respiratory chain contains 3 multisubunit complexes succinate dehydrogenase (complex II, CII), ubiquinol-cytochrome c oxidoreductase (cytochrome b-c1 complex, complex III, CIII) and cytochrome c oxidase (complex IV, CIV), that cooperate to transfer electrons derived from NADH and succinate to molecular oxygen, creating an electrochemical gradient over the inner membrane that drives transmembrane transport and the ATP synthase. Cytochrome c oxidase is the component of the respiratory chain that catalyzes the reduction of oxygen to water. Electrons originating from reduced cytochrome c in the intermembrane space (IMS) are transferred via the dinuclear copper A center (CU(A)) of subunit 2 and heme A of subunit 1 to the active site in subunit 1, a binuclear center (BNC) formed by heme A3 and copper B (CU(B)). The BNC reduces molecular oxygen to 2 water molecules using 4 electrons from cytochrome c in the IMS and 4 protons from the mitochondrial matrix. The sequence is that of Cytochrome c oxidase subunit 2 (MT-CO2) from Casuarius bennetti (Dwarf cassowary).